A 207-amino-acid polypeptide reads, in one-letter code: MDFLTNQNIVFYLLAYLIGSIPFGLILAKTFAGVDIKSQGSKSIGATNVLRVVKQTNPSLAKKLGIATVLLDALKGTLVLLVGIYYGVTNETLWAIAVLAVLGHCYSIYLGLEGGKGVATGLGVYIVLIPYSTLIGAVVWIVCAKVLKISSLSSLLGLIAAVISAIFIYNGLGINSNIPMYLIAFIILYKHIPNIVRLIKGQEGKVI.

The next 6 helical transmembrane spans lie at 8 to 28 (NIVF…LILA), 64 to 84 (LGIA…LVGI), 92 to 112 (TLWA…YLGL), 122 to 142 (LGVY…VWIV), 154 to 174 (SLLG…GLGI), and 176 to 196 (SNIP…PNIV).

The protein belongs to the PlsY family. In terms of assembly, probably interacts with PlsX.

It is found in the cell inner membrane. The enzyme catalyses an acyl phosphate + sn-glycerol 3-phosphate = a 1-acyl-sn-glycero-3-phosphate + phosphate. It functions in the pathway lipid metabolism; phospholipid metabolism. In terms of biological role, catalyzes the transfer of an acyl group from acyl-phosphate (acyl-PO(4)) to glycerol-3-phosphate (G3P) to form lysophosphatidic acid (LPA). This enzyme utilizes acyl-phosphate as fatty acyl donor, but not acyl-CoA or acyl-ACP. The polypeptide is Glycerol-3-phosphate acyltransferase (Aliarcobacter butzleri (strain RM4018) (Arcobacter butzleri)).